A 178-amino-acid polypeptide reads, in one-letter code: ATP synthase subunit delta (178 aa).

Belongs to the ATPase delta chain family. As to quaternary structure, F-type ATPases have 2 components, F(1) - the catalytic core - and F(0) - the membrane proton channel. F(1) has five subunits: alpha(3), beta(3), gamma(1), delta(1), epsilon(1). F(0) has three main subunits: a(1), b(2) and c(10-14). The alpha and beta chains form an alternating ring which encloses part of the gamma chain. F(1) is attached to F(0) by a central stalk formed by the gamma and epsilon chains, while a peripheral stalk is formed by the delta and b chains.

It is found in the cell membrane. F(1)F(0) ATP synthase produces ATP from ADP in the presence of a proton or sodium gradient. F-type ATPases consist of two structural domains, F(1) containing the extramembraneous catalytic core and F(0) containing the membrane proton channel, linked together by a central stalk and a peripheral stalk. During catalysis, ATP synthesis in the catalytic domain of F(1) is coupled via a rotary mechanism of the central stalk subunits to proton translocation. Its function is as follows. This protein is part of the stalk that links CF(0) to CF(1). It either transmits conformational changes from CF(0) to CF(1) or is implicated in proton conduction. The protein is ATP synthase subunit delta of Streptococcus pyogenes serotype M4 (strain MGAS10750).